We begin with the raw amino-acid sequence, 238 residues long: Small ribosomal subunit protein uS2 (238 aa).

This sequence belongs to the universal ribosomal protein uS2 family.

This is Small ribosomal subunit protein uS2 from Synechococcus sp. (strain CC9311).